Here is a 265-residue protein sequence, read N- to C-terminus: NAD kinase 2 (265 aa).

Asparagine 51 acts as the Proton acceptor in catalysis. Residues 122 to 123 (NE), arginine 149, aspartate 151, 162 to 167 (TAYNKS), alanine 186, and asparagine 226 contribute to the NAD(+) site.

Belongs to the NAD kinase family. A divalent metal cation is required as a cofactor.

It localises to the cytoplasm. The catalysed reaction is NAD(+) + ATP = ADP + NADP(+) + H(+). Its function is as follows. Involved in the regulation of the intracellular balance of NAD and NADP, and is a key enzyme in the biosynthesis of NADP. Catalyzes specifically the phosphorylation on 2'-hydroxyl of the adenosine moiety of NAD to yield NADP. The protein is NAD kinase 2 of Halalkalibacterium halodurans (strain ATCC BAA-125 / DSM 18197 / FERM 7344 / JCM 9153 / C-125) (Bacillus halodurans).